The primary structure comprises 539 residues: Lysosomal cobalamin transport escort protein LMBD1 (539 aa).

The Extracellular portion of the chain corresponds to 1–7 (MAAAASE). A helical membrane pass occupies residues 8 to 28 (LLTGWFLFGLALLAILIFSWV). At 29-47 (YVRKYQSRRESEVISTVTA) the chain is on the cytoplasmic side. The chain crosses the membrane as a helical span at residues 48–68 (IFALAVALISSALLPVDIFLV). The Extracellular segment spans residues 69-97 (SYMKNQNGTFKDWADANVSRQIEDTVLYG). N-linked (GlcNAc...) asparagine glycans are attached at residues Asn75 and Asn85. Residues 98-118 (YYTLYSIILFCVFLWIPFVYF) traverse the membrane as a helical segment. Residues 119–141 (YYEEKEEDDGNTCSQVKTALKYT) are Cytoplasmic-facing. A helical membrane pass occupies residues 142–162 (LGFITVCAVLLLIGAFVPLDI). The Extracellular portion of the chain corresponds to 163-185 (PNKKNSTEWEKVKLLFEEFGSSH). An N-linked (GlcNAc...) asparagine glycan is attached at Asn167. A helical transmembrane segment spans residues 186 to 206 (GLTALSFSISSLTVIGMLAAI). Residues 207–302 (TYTAYGMSAL…KFCEAIRPLK (96 aa)) are Cytoplasmic-facing. Residues 303–323 (IVWGVFFIIVALLFTVSLFLS) traverse the membrane as a helical segment. Over 324–361 (NLDKALHSAGFDSGFIILGTNLTNPLNMLLPVLQTVFP) the chain is Extracellular. The N-linked (GlcNAc...) asparagine glycan is linked to Asn344. Residues 362-382 (LDYILITTIVMYFIFTSMAGI) traverse the membrane as a helical segment. Residues 383-405 (RNMGIWFFWIRLYKIRRGKTRPQ) lie on the Cytoplasmic side of the membrane. The helical transmembrane segment at 406–426 (ALLFLCMILLLIVLHTSYMIY) threads the bilayer. Over 427–483 (SLAPQYVMYGSQKYLVQSNKTIDGQPKNVTTFVAKDCDADAPEDQCIVTRTYLFLHK) the chain is Extracellular. N-linked (GlcNAc...) asparagine glycosylation is found at Asn445 and Asn454. Residues 484-504 (FWFFSAVYYFGNWAFIAVFLI) traverse the membrane as a helical segment. Residues 505–539 (GLIVSCCKGKKSVIEGEVDEDDSDMSDDELSAYYC) lie on the Cytoplasmic side of the membrane.

The protein belongs to the LIMR family. LMBRD1 subfamily.

It is found in the endoplasmic reticulum membrane. The protein resides in the lysosome membrane. It localises to the cell membrane. In terms of biological role, lysosomal membrane chaperone required to export cobalamin (vitamin B12) from the lysosome to the cytosol, allowing its conversion to cofactors. Targets ABCD4 transporter from the endoplasmic reticulum to the lysosome. Then forms a complex with lysosomal ABCD4 and cytoplasmic MMACHC to transport cobalamin across the lysosomal membrane. May play a role in mediating and regulating the internalization of the insulin receptor. This is Lysosomal cobalamin transport escort protein LMBD1 (LMBRD1) from Gallus gallus (Chicken).